The sequence spans 182 residues: MHILGIDPGLQITGFGVVDMDGPHLRYVASGTIKTTHLDTKDLPGRLKVLFDGVREVVQRYQPEVASVEIVFVNVNPQATLLLGQARGACITALVSSDLAVAEYTALQMKKAVAGYGKAGKAEVQQMVMRLLKLPSLPGKDAADALGLAITHAHVGTAMARLALASEAGGKMDGNYRAGRSR.

Residues Asp-7, Glu-69, and Asp-141 contribute to the active site. Residues Asp-7, Glu-69, and Asp-141 each coordinate Mg(2+).

The protein belongs to the RuvC family. Homodimer which binds Holliday junction (HJ) DNA. The HJ becomes 2-fold symmetrical on binding to RuvC with unstacked arms; it has a different conformation from HJ DNA in complex with RuvA. In the full resolvosome a probable DNA-RuvA(4)-RuvB(12)-RuvC(2) complex forms which resolves the HJ. It depends on Mg(2+) as a cofactor.

The protein resides in the cytoplasm. The enzyme catalyses Endonucleolytic cleavage at a junction such as a reciprocal single-stranded crossover between two homologous DNA duplexes (Holliday junction).. The RuvA-RuvB-RuvC complex processes Holliday junction (HJ) DNA during genetic recombination and DNA repair. Endonuclease that resolves HJ intermediates. Cleaves cruciform DNA by making single-stranded nicks across the HJ at symmetrical positions within the homologous arms, yielding a 5'-phosphate and a 3'-hydroxyl group; requires a central core of homology in the junction. The consensus cleavage sequence is 5'-(A/T)TT(C/G)-3'. Cleavage occurs on the 3'-side of the TT dinucleotide at the point of strand exchange. HJ branch migration catalyzed by RuvA-RuvB allows RuvC to scan DNA until it finds its consensus sequence, where it cleaves and resolves the cruciform DNA. The chain is Crossover junction endodeoxyribonuclease RuvC from Polaromonas naphthalenivorans (strain CJ2).